Reading from the N-terminus, the 165-residue chain is Nucleotide-binding protein Suden_0039 (165 aa).

The protein belongs to the YajQ family.

In terms of biological role, nucleotide-binding protein. This chain is Nucleotide-binding protein Suden_0039, found in Sulfurimonas denitrificans (strain ATCC 33889 / DSM 1251) (Thiomicrospira denitrificans (strain ATCC 33889 / DSM 1251)).